Reading from the N-terminus, the 181-residue chain is Alkyl hydroperoxide reductase AhpD (181 aa).

The active-site Proton donor is the cysteine 131. Cysteines 131 and 134 form a disulfide. Cysteine 134 acts as the Cysteine sulfenic acid (-SOH) intermediate in catalysis.

The protein belongs to the AhpD family.

It catalyses the reaction N(6)-[(R)-dihydrolipoyl]-L-lysyl-[lipoyl-carrier protein] + a hydroperoxide = N(6)-[(R)-lipoyl]-L-lysyl-[lipoyl-carrier protein] + an alcohol + H2O. Antioxidant protein with alkyl hydroperoxidase activity. Required for the reduction of the AhpC active site cysteine residues and for the regeneration of the AhpC enzyme activity. The chain is Alkyl hydroperoxide reductase AhpD from Bradyrhizobium sp. (strain BTAi1 / ATCC BAA-1182).